We begin with the raw amino-acid sequence, 540 residues long: Malolactic enzyme (540 aa).

The active-site Proton donor is Tyr-90. Lys-163 (proton acceptor) is an active-site residue. Lys-163 contacts substrate. Mn(2+) contacts are provided by Glu-234, Asp-235, and Asp-258. Residues 291–294, Asn-403, and Asn-448 each bind NAD(+); that span reads GGSA. Residue Asn-448 coordinates substrate.

It belongs to the malic enzymes family. As to quaternary structure, homodimer. Mn(2+) is required as a cofactor. It depends on NAD(+) as a cofactor.

It catalyses the reaction (S)-malate + H(+) = (S)-lactate + CO2. Involved in the malolactic fermentation (MLF) of wine, which results in a natural decrease in acidity and favorable changes in wine flavors. Catalyzes the decarboxylation of L-malate to L-lactate. The sequence is that of Malolactic enzyme from Lactococcus lactis subsp. lactis (strain IL1403) (Streptococcus lactis).